A 155-amino-acid chain; its full sequence is Calmodulin, flagellar (155 aa).

EF-hand domains follow at residues 14 to 49, 50 to 85, 87 to 122, and 123 to 155; these read EQIA…LGQN, PTEA…KMKD, DNEE…LGEK, and LTDE…MMQK. Asp-27, Asp-29, Asp-31, Thr-33, Glu-38, Asp-63, Asp-65, Asn-67, Thr-69, Glu-74, Asp-100, Asp-102, Asn-104, Glu-111, Asp-136, Asp-138, Asp-140, Gln-142, and Glu-147 together coordinate Ca(2+).

It belongs to the calmodulin family.

The protein resides in the cell projection. Its subcellular location is the cilium. The protein localises to the flagellum. Its function is as follows. Calmodulin mediates the control of a large number of enzymes, ion channels and other proteins by Ca(2+). Among the enzymes to be stimulated by the calmodulin-Ca(2+) complex are a number of protein kinases and phosphatases. The chain is Calmodulin, flagellar (CAM1) from Naegleria gruberi (Amoeba).